The chain runs to 298 residues: Protease HtpX homolog (298 aa).

The next 2 helical transmembrane spans lie at 15-35 and 39-59; these read YVMI…GYVF and AMAG…MMIA. His143 is a binding site for Zn(2+). Glu144 is an active-site residue. A Zn(2+)-binding site is contributed by His147. 2 consecutive transmembrane segments (helical) span residues 158-178 and 197-217; these read IALA…RSFW and IVMM…TTIA. Glu226 is a Zn(2+) binding site.

Belongs to the peptidase M48B family. Zn(2+) is required as a cofactor.

The protein localises to the cell membrane. The protein is Protease HtpX homolog of Pediococcus pentosaceus (strain ATCC 25745 / CCUG 21536 / LMG 10740 / 183-1w).